We begin with the raw amino-acid sequence, 304 residues long: Nod factor export ATP-binding protein I (304 aa).

One can recognise an ABC transporter domain in the interval Ile6–Phe236. An ATP-binding site is contributed by Gly38–Thr45.

Belongs to the ABC transporter superfamily. Lipooligosaccharide exporter (TC 3.A.1.102) family. In terms of assembly, the complex is composed of two ATP-binding proteins (NodI) and two transmembrane proteins (NodJ).

The protein resides in the cell inner membrane. Its function is as follows. Part of the ABC transporter complex NodIJ involved in the export of the nodulation factors (Nod factors), the bacterial signal molecules that induce symbiosis and subsequent nodulation induction. Nod factors are LCO (lipo-chitin oligosaccharide), a modified beta-1,4-linked N-acetylglucosamine oligosaccharide. This subunit is responsible for energy coupling to the transport system. The protein is Nod factor export ATP-binding protein I of Paraburkholderia xenovorans (strain LB400).